The primary structure comprises 218 residues: MPGVVFDLDGTLVHSAPDIHAAVNKALAEEGGAPFTLAEITGFIGNGVPVLIQRVLAARGEAPDAHRQAELQGRFMAHYEADPATLTSVYPGAEAAIRHLRAEGWRIGLCTNKPVGASRQILSLFGLLELFDAIIGGDSLPQRKPDPAPLRATAAALNEEVVLYVGDSEVDAATAEAAGLRFALFTEGYRHAPVHELPHHGLFSHHDELPDLLRRLLA.

Residue D7 is the Nucleophile of the active site. Mg(2+) is bound by residues D7, D9, and D167.

Belongs to the HAD-like hydrolase superfamily. CbbY/CbbZ/Gph/YieH family. Requires Mg(2+) as cofactor.

The catalysed reaction is 2-phosphoglycolate + H2O = glycolate + phosphate. It participates in organic acid metabolism; glycolate biosynthesis; glycolate from 2-phosphoglycolate: step 1/1. Functionally, specifically catalyzes the dephosphorylation of 2-phosphoglycolate. Is involved in the dissimilation of the intracellular 2-phosphoglycolate formed during the DNA repair of 3'-phosphoglycolate ends, a major class of DNA lesions induced by oxidative stress. The protein is Phosphoglycolate phosphatase of Cereibacter sphaeroides (strain ATCC 17029 / ATH 2.4.9) (Rhodobacter sphaeroides).